Reading from the N-terminus, the 141-residue chain is Nucleoside diphosphate kinase (141 aa).

Positions 11, 59, 87, 93, 104, and 114 each coordinate ATP. The Pros-phosphohistidine intermediate role is filled by histidine 117.

The protein belongs to the NDK family. As to quaternary structure, homotetramer. Mg(2+) serves as cofactor.

The protein localises to the cytoplasm. The enzyme catalyses a 2'-deoxyribonucleoside 5'-diphosphate + ATP = a 2'-deoxyribonucleoside 5'-triphosphate + ADP. It catalyses the reaction a ribonucleoside 5'-diphosphate + ATP = a ribonucleoside 5'-triphosphate + ADP. In terms of biological role, major role in the synthesis of nucleoside triphosphates other than ATP. The ATP gamma phosphate is transferred to the NDP beta phosphate via a ping-pong mechanism, using a phosphorylated active-site intermediate. The sequence is that of Nucleoside diphosphate kinase from Haemophilus influenzae (strain 86-028NP).